We begin with the raw amino-acid sequence, 303 residues long: Histone deacetylase HDT2 (303 aa).

A compositionally biased stretch (acidic residues) spans E100–L112. Positions E100–C282 are disordered. Over residues E119 to E133 the composition is skewed to basic and acidic residues. Residues D154–T203 are compositionally biased toward acidic residues. The segment covering P204–A217 has biased composition (basic and acidic residues). Residues V277–H300 form a C2H2-type zinc finger.

This sequence belongs to the histone deacetylase HD2 family. In terms of assembly, multimer. Possibly forms a homotrimer with HDT1 and/or HDT3.

The protein resides in the nucleus. It localises to the nucleolus. Mediates the deacetylation of lysine residues on the N-terminal part of the core histones (H2A, H2B, H3 and H4). Histone deacetylation gives a tag for epigenetic repression and plays an important role in transcriptional regulation, cell cycle progression and developmental events. In Zea mays (Maize), this protein is Histone deacetylase HDT2 (HDT2).